We begin with the raw amino-acid sequence, 117 residues long: Fluoride-specific ion channel FluC 2 (117 aa).

Transmembrane regions (helical) follow at residues 1 to 21 and 46 to 66; these read MISI…RSAI and FLIG…AFFV. Na(+) is bound by residues G71 and T74. A helical membrane pass occupies residues 95–115; the sequence is LFLNYSLLQFIIGFIACYIGY.

Belongs to the fluoride channel Fluc/FEX (TC 1.A.43) family.

It localises to the cell membrane. The catalysed reaction is fluoride(in) = fluoride(out). Its activity is regulated as follows. Na(+) is not transported, but it plays an essential structural role and its presence is essential for fluoride channel function. In terms of biological role, fluoride-specific ion channel. Important for reducing fluoride concentration in the cell, thus reducing its toxicity. The polypeptide is Fluoride-specific ion channel FluC 2 (Staphylococcus aureus (strain NCTC 8325 / PS 47)).